The sequence spans 312 residues: Ribosomal protein L11 methyltransferase (312 aa).

4 residues coordinate S-adenosyl-L-methionine: Thr160, Gly181, Asp203, and Asn246.

It belongs to the methyltransferase superfamily. PrmA family.

Its subcellular location is the cytoplasm. The catalysed reaction is L-lysyl-[protein] + 3 S-adenosyl-L-methionine = N(6),N(6),N(6)-trimethyl-L-lysyl-[protein] + 3 S-adenosyl-L-homocysteine + 3 H(+). In terms of biological role, methylates ribosomal protein L11. This is Ribosomal protein L11 methyltransferase from Staphylococcus aureus (strain JH1).